The primary structure comprises 344 residues: Ketol-acid reductoisomerase (NADP(+)) (344 aa).

The region spanning 2-181 (AKVLYEKDIQ…GAARAGVLET (180 aa)) is the KARI N-terminal Rossmann domain. NADP(+)-binding positions include 25-28 (YGSQ), arginine 48, serine 52, and 82-85 (DEMQ). Histidine 107 is a catalytic residue. Residue glycine 133 coordinates NADP(+). The 146-residue stretch at 182–327 (SFQEETETDL…RELRELMPFV (146 aa)) folds into the KARI C-terminal knotted domain. Positions 190, 194, 226, and 230 each coordinate Mg(2+). Serine 251 provides a ligand contact to substrate.

It belongs to the ketol-acid reductoisomerase family. The cofactor is Mg(2+).

It catalyses the reaction (2R)-2,3-dihydroxy-3-methylbutanoate + NADP(+) = (2S)-2-acetolactate + NADPH + H(+). It carries out the reaction (2R,3R)-2,3-dihydroxy-3-methylpentanoate + NADP(+) = (S)-2-ethyl-2-hydroxy-3-oxobutanoate + NADPH + H(+). It functions in the pathway amino-acid biosynthesis; L-isoleucine biosynthesis; L-isoleucine from 2-oxobutanoate: step 2/4. Its pathway is amino-acid biosynthesis; L-valine biosynthesis; L-valine from pyruvate: step 2/4. Functionally, involved in the biosynthesis of branched-chain amino acids (BCAA). Catalyzes an alkyl-migration followed by a ketol-acid reduction of (S)-2-acetolactate (S2AL) to yield (R)-2,3-dihydroxy-isovalerate. In the isomerase reaction, S2AL is rearranged via a Mg-dependent methyl migration to produce 3-hydroxy-3-methyl-2-ketobutyrate (HMKB). In the reductase reaction, this 2-ketoacid undergoes a metal-dependent reduction by NADPH to yield (R)-2,3-dihydroxy-isovalerate. This Oceanobacillus iheyensis (strain DSM 14371 / CIP 107618 / JCM 11309 / KCTC 3954 / HTE831) protein is Ketol-acid reductoisomerase (NADP(+)).